A 289-amino-acid polypeptide reads, in one-letter code: Phosphatidylglycerol--prolipoprotein diacylglyceryl transferase (289 aa).

7 consecutive transmembrane segments (helical) span residues alanine 23 to valine 43, leucine 61 to tyrosine 81, glycine 99 to histidine 119, phenylalanine 125 to leucine 145, serine 199 to isoleucine 219, glycine 226 to phenylalanine 246, and leucine 259 to valine 279. An a 1,2-diacyl-sn-glycero-3-phospho-(1'-sn-glycerol)-binding site is contributed by arginine 144.

Belongs to the Lgt family.

It localises to the cell inner membrane. The enzyme catalyses L-cysteinyl-[prolipoprotein] + a 1,2-diacyl-sn-glycero-3-phospho-(1'-sn-glycerol) = an S-1,2-diacyl-sn-glyceryl-L-cysteinyl-[prolipoprotein] + sn-glycerol 1-phosphate + H(+). It functions in the pathway protein modification; lipoprotein biosynthesis (diacylglyceryl transfer). Catalyzes the transfer of the diacylglyceryl group from phosphatidylglycerol to the sulfhydryl group of the N-terminal cysteine of a prolipoprotein, the first step in the formation of mature lipoproteins. This Pectobacterium carotovorum subsp. carotovorum (strain PC1) protein is Phosphatidylglycerol--prolipoprotein diacylglyceryl transferase.